A 74-amino-acid chain; its full sequence is UPF0435 protein GWCH70_0415 (74 aa).

This sequence belongs to the UPF0435 family.

This Geobacillus sp. (strain WCH70) protein is UPF0435 protein GWCH70_0415.